We begin with the raw amino-acid sequence, 155 residues long: Riboflavin kinase (155 aa).

The ATP site is built by Gly15, Lys21, Thr27, and Asn29. The Mg(2+) site is built by Thr27 and Asn29. Glu79 acts as the Nucleophile in catalysis. The ATP site is built by Ile82, His84, and Tyr91. Residues Arg104, Lys107, and Phe109 each contribute to the FMN site.

In terms of assembly, monomer. Directly interacts with TNFRSF1A death domain. TNFRSF1A-binding may be supported by TRADD. In the absence of TNFRSF1A, interacts with TRADD. Independently of TNFRSF1A, interacts with the NADPH oxidase subunit CYBA. It depends on Zn(2+) as a cofactor. Mg(2+) is required as a cofactor. Detected in brain, placenta and urinary bladder.

It is found in the cytoplasm. It catalyses the reaction riboflavin + ATP = FMN + ADP + H(+). It functions in the pathway cofactor biosynthesis; FMN biosynthesis; FMN from riboflavin (ATP route): step 1/1. Functionally, catalyzes the phosphorylation of riboflavin (vitamin B2) to form flavin-mononucleotide (FMN), hence rate-limiting enzyme in the synthesis of FAD. Essential for TNF-induced reactive oxygen species (ROS) production. Through its interaction with both TNFRSF1A and CYBA, physically and functionally couples TNFRSF1A to NADPH oxidase. TNF-activation of RFK may enhance the incorporation of FAD in NADPH oxidase, a critical step for the assembly and activation of NADPH oxidase. This chain is Riboflavin kinase (RFK), found in Homo sapiens (Human).